Reading from the N-terminus, the 310-residue chain is Malate dehydrogenase (310 aa).

Residues 7–13 (GAAGGIG) and D34 contribute to the NAD(+) site. Substrate is bound by residues R81 and R87. NAD(+) contacts are provided by residues N94 and 117–119 (ITN). Substrate contacts are provided by N119 and R153. H177 serves as the catalytic Proton acceptor. M227 is an NAD(+) binding site.

It belongs to the LDH/MDH superfamily. MDH type 1 family. As to quaternary structure, homodimer.

It catalyses the reaction (S)-malate + NAD(+) = oxaloacetate + NADH + H(+). Catalyzes the reversible oxidation of malate to oxaloacetate. In Idiomarina loihiensis (strain ATCC BAA-735 / DSM 15497 / L2-TR), this protein is Malate dehydrogenase.